The sequence spans 202 residues: LexA repressor (202 aa).

The segment at residues 28–47 (IREIGDQFGITAKGAYDHLK) is a DNA-binding region (H-T-H motif). Catalysis depends on for autocatalytic cleavage activity residues Ser-126 and Lys-163.

Belongs to the peptidase S24 family. As to quaternary structure, homodimer.

The catalysed reaction is Hydrolysis of Ala-|-Gly bond in repressor LexA.. Functionally, represses a number of genes involved in the response to DNA damage (SOS response), including recA and lexA. In the presence of single-stranded DNA, RecA interacts with LexA causing an autocatalytic cleavage which disrupts the DNA-binding part of LexA, leading to derepression of the SOS regulon and eventually DNA repair. This is LexA repressor from Leptospira biflexa serovar Patoc (strain Patoc 1 / Ames).